We begin with the raw amino-acid sequence, 463 residues long: NADH dehydrogenase [ubiquinone] iron-sulfur protein 2, mitochondrial (463 aa).

Residues 1-33 constitute a mitochondrion transit peptide; it reads MAALRALGGLRGVAAQVLRPGAGVRLPIQPSRG. An N6-acetyllysine modification is found at Lys-62. Position 118 is a symmetric dimethylarginine (Arg-118). Residues Cys-326, Cys-332, and Cys-347 each contribute to the [4Fe-4S] cluster site.

Belongs to the complex I 49 kDa subunit family. Core subunit of respiratory chain NADH dehydrogenase (Complex I) which is composed of 45 different subunits. Component of the iron-sulfur (IP) fragment of the enzyme. Interacts with NDUFAF3. Interacts with NDUFAF7. Interacts with CERS2. [4Fe-4S] cluster is required as a cofactor. Post-translationally, dimethylation at Arg-118 by NDUFAF7 takes place after NDUFS2 assembles into the complex I, leading to stabilize the early intermediate complex.

The protein localises to the mitochondrion inner membrane. The catalysed reaction is a ubiquinone + NADH + 5 H(+)(in) = a ubiquinol + NAD(+) + 4 H(+)(out). Its function is as follows. Core subunit of the mitochondrial membrane respiratory chain NADH dehydrogenase (Complex I) which catalyzes electron transfer from NADH through the respiratory chain, using ubiquinone as an electron acceptor. Essential for the catalytic activity and assembly of complex I. Redox-sensitive, critical component of the oxygen-sensing pathway in the pulmonary vasculature which plays a key role in acute pulmonary oxygen-sensing and hypoxic pulmonary vasoconstriction. Plays an important role in carotid body sensing of hypoxia. Essential for glia-like neural stem and progenitor cell proliferation, differentiation and subsequent oligodendrocyte or neuronal maturation. The sequence is that of NADH dehydrogenase [ubiquinone] iron-sulfur protein 2, mitochondrial (NDUFS2) from Pongo pygmaeus (Bornean orangutan).